A 553-amino-acid polypeptide reads, in one-letter code: Adenine deaminase (553 aa).

This sequence belongs to the metallo-dependent hydrolases superfamily. Adenine deaminase family. Mn(2+) serves as cofactor.

It catalyses the reaction adenine + H2O + H(+) = hypoxanthine + NH4(+). This Methanosarcina acetivorans (strain ATCC 35395 / DSM 2834 / JCM 12185 / C2A) protein is Adenine deaminase.